The primary structure comprises 67 residues: uncharacterized protein (67 aa).

This is an uncharacterized protein from Saccharolobus islandicus (Sulfolobus islandicus).